A 59-amino-acid chain; its full sequence is Large ribosomal subunit protein uL30 (59 aa).

This sequence belongs to the universal ribosomal protein uL30 family. Part of the 50S ribosomal subunit.

The chain is Large ribosomal subunit protein uL30 from Brachyspira hyodysenteriae (strain ATCC 49526 / WA1).